The following is a 121-amino-acid chain: Heimdall profilin (121 aa).

Belongs to the Asgard profilin family.

The protein localises to the cytoplasm. It is found in the cytoskeleton. Binds to actin and affects the structure of the cytoskeleton. At high concentrations inhibits spontaneous rabbit actin nucleation. This strongly suggests this archaea has a profilin-regulated actin system, and actin-type genes can be identified in this organism. This Heimdallarchaeota archaeon (strain LC_2) protein is Heimdall profilin.